The chain runs to 411 residues: 2,3-bisphosphoglycerate-independent phosphoglycerate mutase (411 aa).

It belongs to the BPG-independent phosphoglycerate mutase family. A-PGAM subfamily.

It carries out the reaction (2R)-2-phosphoglycerate = (2R)-3-phosphoglycerate. It participates in carbohydrate degradation; glycolysis; pyruvate from D-glyceraldehyde 3-phosphate: step 3/5. Its function is as follows. Catalyzes the interconversion of 2-phosphoglycerate and 3-phosphoglycerate. In Pyrobaculum arsenaticum (strain DSM 13514 / JCM 11321 / PZ6), this protein is 2,3-bisphosphoglycerate-independent phosphoglycerate mutase.